The chain runs to 63 residues: Translational regulator CsrA (63 aa).

Belongs to the CsrA/RsmA family. In terms of assembly, homodimer; the beta-strands of each monomer intercalate to form a hydrophobic core, while the alpha-helices form wings that extend away from the core.

The protein localises to the cytoplasm. Its function is as follows. A key translational regulator that binds mRNA to regulate translation initiation and/or mRNA stability. Mediates global changes in gene expression, shifting from rapid growth to stress survival by linking envelope stress, the stringent response and the catabolite repression systems. Usually binds in the 5'-UTR; binding at or near the Shine-Dalgarno sequence prevents ribosome-binding, repressing translation, binding elsewhere in the 5'-UTR can activate translation and/or stabilize the mRNA. Its function is antagonized by small RNA(s). The sequence is that of Translational regulator CsrA from Haemophilus influenzae (strain 86-028NP).